The primary structure comprises 130 residues: Protein ApaG (130 aa).

An ApaG domain is found at 3-127 (RAVTRQIEVL…FSLDSPDIRR (125 aa)).

This is Protein ApaG from Afipia carboxidovorans (strain ATCC 49405 / DSM 1227 / KCTC 32145 / OM5) (Oligotropha carboxidovorans).